The sequence spans 130 residues: MAKKIRKIGIRKGKRKIPKGVVHVQATFNNTIVTITDIKGEVISWSSAGSCGFKGTKKGTPFAAQTAAENAVRQAIEQGMKEAEITVSGPGSGRETAIRAIRTAGLGITVLKDVTPIPHNGCRPPKKRRV.

Belongs to the universal ribosomal protein uS11 family. In terms of assembly, part of the 30S ribosomal subunit.

Its subcellular location is the plastid. It localises to the chloroplast. In Chlorokybus atmophyticus (Soil alga), this protein is Small ribosomal subunit protein uS11c.